The sequence spans 381 residues: Creatine kinase M-type (381 aa).

The Phosphagen kinase N-terminal domain occupies 11 to 98 (KLNFKAEEEY…FDPIIQDRHG (88 aa)). In terms of domain architecture, Phosphagen kinase C-terminal spans 125-367 (YVLSSRVRTG…KLMVEMEKKL (243 aa)). Residue 128-132 (SSRVR) participates in ATP binding. Ser-164 carries the post-translational modification Phosphoserine. Thr-166 is modified (phosphothreonine). A Phosphoserine modification is found at Ser-178. Phosphothreonine is present on Thr-180. Residue His-191 participates in ATP binding. A Phosphoserine modification is found at Ser-199. Positions 236 and 292 each coordinate ATP. A phosphothreonine mark is found at Thr-313 and Thr-322. ATP-binding positions include 320–325 (RGTGGV) and Asp-335. A Phosphoserine modification is found at Ser-372.

It belongs to the ATP:guanido phosphotransferase family. In terms of assembly, dimer of identical or non-identical chains, which can be either B (brain type) or M (muscle type). With MM being the major form in skeletal muscle and myocardium, MB existing in myocardium, and BB existing in many tissues, especially brain.

The protein resides in the cytoplasm. The enzyme catalyses creatine + ATP = N-phosphocreatine + ADP + H(+). Reversibly catalyzes the transfer of phosphate between ATP and various phosphogens (e.g. creatine phosphate). Creatine kinase isoenzymes play a central role in energy transduction in tissues with large, fluctuating energy demands, such as skeletal muscle, heart, brain and spermatozoa. The protein is Creatine kinase M-type (CKM) of Bos taurus (Bovine).